The chain runs to 188 residues: Gamma-glutamylcyclotransferase (188 aa).

Residue 19 to 24 (YFAYGS) coordinates substrate. Residue E98 is the Proton acceptor of the active site. Y139 contributes to the substrate binding site. A Phosphoserine modification is found at S173.

Belongs to the gamma-glutamylcyclotransferase family. As to quaternary structure, homodimer.

The enzyme catalyses an alpha-(gamma-L-glutamyl)-L-amino acid = 5-oxo-L-proline + an L-alpha-amino acid. Its function is as follows. Catalyzes the formation of 5-oxoproline from gamma-glutamyl dipeptides and may play a significant role in glutathione homeostasis. Induces release of cytochrome c from mitochondria with resultant induction of apoptosis. This chain is Gamma-glutamylcyclotransferase, found in Homo sapiens (Human).